A 122-amino-acid polypeptide reads, in one-letter code: Small ribosomal subunit protein uS13 (122 aa).

The tract at residues 98–122 is disordered; that stretch reads VRGQRTHTNARTRKGPAKAIAGKKK.

This sequence belongs to the universal ribosomal protein uS13 family. Part of the 30S ribosomal subunit. Forms a loose heterodimer with protein S19. Forms two bridges to the 50S subunit in the 70S ribosome.

In terms of biological role, located at the top of the head of the 30S subunit, it contacts several helices of the 16S rRNA. In the 70S ribosome it contacts the 23S rRNA (bridge B1a) and protein L5 of the 50S subunit (bridge B1b), connecting the 2 subunits; these bridges are implicated in subunit movement. Contacts the tRNAs in the A and P-sites. The chain is Small ribosomal subunit protein uS13 from Jannaschia sp. (strain CCS1).